A 448-amino-acid polypeptide reads, in one-letter code: Phosphoglucosamine mutase (448 aa).

Ser-104 serves as the catalytic Phosphoserine intermediate. Mg(2+) is bound by residues Ser-104, Asp-243, Asp-245, and Asp-247. The residue at position 104 (Ser-104) is a Phosphoserine.

This sequence belongs to the phosphohexose mutase family. Mg(2+) serves as cofactor. Activated by phosphorylation.

It catalyses the reaction alpha-D-glucosamine 1-phosphate = D-glucosamine 6-phosphate. Catalyzes the conversion of glucosamine-6-phosphate to glucosamine-1-phosphate. The polypeptide is Phosphoglucosamine mutase (Xylella fastidiosa (strain 9a5c)).